Reading from the N-terminus, the 187-residue chain is Ribosome-recycling factor (187 aa).

This sequence belongs to the RRF family.

The protein localises to the cytoplasm. Responsible for the release of ribosomes from messenger RNA at the termination of protein biosynthesis. May increase the efficiency of translation by recycling ribosomes from one round of translation to another. The sequence is that of Ribosome-recycling factor from Nitrobacter winogradskyi (strain ATCC 25391 / DSM 10237 / CIP 104748 / NCIMB 11846 / Nb-255).